Consider the following 181-residue polypeptide: UPF0316 protein Bcer98_2136 (181 aa).

3 helical membrane-spanning segments follow: residues 6-26 (LIFV…ILLV), 32-52 (SAAG…GIVF), and 58-78 (WMNI…GGYI).

Belongs to the UPF0316 family.

It is found in the cell membrane. The polypeptide is UPF0316 protein Bcer98_2136 (Bacillus cytotoxicus (strain DSM 22905 / CIP 110041 / 391-98 / NVH 391-98)).